The following is an 88-amino-acid chain: Phosphocarrier protein HPr (88 aa).

The region spanning 1-88 (MASKEFHIVV…ETMTKEGLAE (88 aa)) is the HPr domain. Residue H15 is the Pros-phosphohistidine intermediate of the active site. S46 is modified (phosphoserine; by HPrK/P).

This sequence belongs to the HPr family.

The protein resides in the cytoplasm. Its activity is regulated as follows. Phosphorylation on Ser-46 inhibits the phosphoryl transfer from enzyme I to HPr. Its function is as follows. General (non sugar-specific) component of the phosphoenolpyruvate-dependent sugar phosphotransferase system (sugar PTS). This major carbohydrate active-transport system catalyzes the phosphorylation of incoming sugar substrates concomitantly with their translocation across the cell membrane. The phosphoryl group from phosphoenolpyruvate (PEP) is transferred to the phosphoryl carrier protein HPr by enzyme I. Phospho-HPr then transfers it to the PTS EIIA domain. Functionally, P-Ser-HPr interacts with the catabolite control protein A (CcpA), forming a complex that binds to DNA at the catabolite response elements cre, operator sites preceding a large number of catabolite-regulated genes. Thus, P-Ser-HPr is a corepressor in carbon catabolite repression (CCR), a mechanism that allows bacteria to coordinate and optimize the utilization of available carbon sources. P-Ser-HPr also plays a role in inducer exclusion, in which it probably interacts with several non-PTS permeases and inhibits their transport activity. This is Phosphocarrier protein HPr (ptsH) from Lactococcus lactis subsp. lactis (strain IL1403) (Streptococcus lactis).